Here is a 580-residue protein sequence, read N- to C-terminus: Serine/threonine-protein kinase srk1 (580 aa).

Residues 51 to 61 (VADSTQNPTSK) are compositionally biased toward polar residues. The interval 51–91 (VADSTQNPTSKPKSRHAHFHETVHENPSEYSRSKCKQPTNE) is disordered. The region spanning 124 to 421 (YTLLQKMGDG…IHQFLAHPWI (298 aa)) is the Protein kinase domain. Residues 130–138 (MGDGAFSNV) and K153 contribute to the ATP site. D257 (proton acceptor) is an active-site residue. The tract at residues 530–580 (NLSGENDPSLASRQPAQSQQQSSQRSRNKFKGFQLNLSKATLYNRRHRQKV) is disordered. Residues 537–554 (PSLASRQPAQSQQQSSQR) are compositionally biased toward low complexity.

It belongs to the protein kinase superfamily. CAMK Ser/Thr protein kinase family. CaMK subfamily. It depends on Mg(2+) as a cofactor. Phosphorylated by sty1.

The protein localises to the cytoplasm. It is found in the nucleus. Its subcellular location is the nucleolus. It localises to the spore core. It carries out the reaction L-seryl-[protein] + ATP = O-phospho-L-seryl-[protein] + ADP + H(+). The catalysed reaction is L-threonyl-[protein] + ATP = O-phospho-L-threonyl-[protein] + ADP + H(+). Its function is as follows. Delays the mitotic G2/M transition by promoting nuclear exclusion of cdc25. During osmotic stress, inhibits the G2/M transition in a sty1 stress-activated MAPK pathway-dependent manner. The protein is Serine/threonine-protein kinase srk1 of Schizosaccharomyces pombe (strain 972 / ATCC 24843) (Fission yeast).